We begin with the raw amino-acid sequence, 441 residues long: Peroxisomal multifunctional enzyme A (441 aa).

The tract at residues 1–302 is 3-hydroxyacyl-CoA dehydrogenase; that stretch reads MALNFKDKVV…VNSKPADGES (302 aa). NAD(+) is bound by residues 11 to 35, Ile-19, Asp-38, 73 to 74, and Asn-97; these read IVTGAGGGIGKVYALEFAKRGAKVV and SV. Ser-149 provides a ligand contact to substrate. Catalysis depends on Tyr-162, which acts as the Proton acceptor. NAD(+)-binding positions include 162 to 166 and 194 to 197; these read YGSMK and AASR. The SCP2 domain occupies 331-440; the sequence is ASKIFTTIQG…KLGALMQGSK (110 aa). Gln-412 serves as a coordination point for substrate.

This sequence belongs to the short-chain dehydrogenases/reductases (SDR) family.

It localises to the peroxisome. The catalysed reaction is a (3S)-3-hydroxyacyl-CoA + NAD(+) = a 3-oxoacyl-CoA + NADH + H(+). It participates in lipid metabolism; fatty acid beta-oxidation. In terms of biological role, enzyme acting on the peroxisomal beta-oxidation pathway for fatty acids. Protects the cells from the increase of the harmful xenobiotic fatty acids incorporated from their diets and optimizes cellular lipid composition for proper development. The chain is Peroxisomal multifunctional enzyme A (mfeA) from Dictyostelium discoideum (Social amoeba).